The chain runs to 161 residues: MASTKRRLNREESSVVLGEEQVAELKEAFELFDKDRTGFIKKDALKTTCKQFGVFVMEDQLDAMFAEADTTKSGAIGFPEFMSMMSRRMKQTSNEQILMNAFKTFDPEGNGYILTKDLSKALTTLGDKLTEAELQELLSISENEQKQVKYDLFVNTLFSKK.

2 positions are modified to phosphoserine: Ser-13 and Ser-14. 3 consecutive EF-hand domains span residues Glu-20–Phe-55, Val-56–Gln-91, and Ser-93–Lys-128.

In terms of assembly, myosin is a hexamer of 2 heavy chains and 4 light chains (two regulatory light chains and two essential light chains).

The chain is Myosin regulatory light chain (mlcR) from Dictyostelium discoideum (Social amoeba).